The sequence spans 84 residues: uncharacterized protein (84 aa).

The next 2 membrane-spanning stretches (helical) occupy residues 7 to 27 (HVNF…ILCI) and 52 to 72 (ITII…INPC).

The protein localises to the membrane. This is an uncharacterized protein from Saccharomyces cerevisiae (strain ATCC 204508 / S288c) (Baker's yeast).